We begin with the raw amino-acid sequence, 82 residues long: Small ribosomal subunit protein uS17 (82 aa).

Belongs to the universal ribosomal protein uS17 family. In terms of assembly, part of the 30S ribosomal subunit.

Functionally, one of the primary rRNA binding proteins, it binds specifically to the 5'-end of 16S ribosomal RNA. The chain is Small ribosomal subunit protein uS17 from Nitrobacter winogradskyi (strain ATCC 25391 / DSM 10237 / CIP 104748 / NCIMB 11846 / Nb-255).